A 236-amino-acid polypeptide reads, in one-letter code: Small ribosomal subunit protein uS3 (236 aa).

Residues 39-112 (IREFITKHPK…RINLKVEEVG (74 aa)) enclose the KH type-2 domain. The segment at 212–236 (YGDDNDGADAQTGQASKKPKRSYKR) is disordered.

It belongs to the universal ribosomal protein uS3 family. Part of the 30S ribosomal subunit. Forms a tight complex with proteins S10 and S14.

Functionally, binds the lower part of the 30S subunit head. Binds mRNA in the 70S ribosome, positioning it for translation. The chain is Small ribosomal subunit protein uS3 from Rhodopirellula baltica (strain DSM 10527 / NCIMB 13988 / SH1).